The primary structure comprises 642 residues: Threonine--tRNA ligase (642 aa).

Residues 1-61 enclose the TGS domain; that stretch reads MPIITLPDGS…TADSELAIIT (61 aa). Positions 243–534 are catalytic; that stretch reads DHRKIGKQLD…LIEEYAGKFP (292 aa). Zn(2+) is bound by residues Cys334, His385, and His511.

This sequence belongs to the class-II aminoacyl-tRNA synthetase family. In terms of assembly, homodimer. Zn(2+) is required as a cofactor.

It localises to the cytoplasm. It carries out the reaction tRNA(Thr) + L-threonine + ATP = L-threonyl-tRNA(Thr) + AMP + diphosphate + H(+). In terms of biological role, catalyzes the attachment of threonine to tRNA(Thr) in a two-step reaction: L-threonine is first activated by ATP to form Thr-AMP and then transferred to the acceptor end of tRNA(Thr). Also edits incorrectly charged L-seryl-tRNA(Thr). This Shewanella frigidimarina (strain NCIMB 400) protein is Threonine--tRNA ligase.